The primary structure comprises 256 residues: Ribonuclease T2 (256 aa).

A signal peptide spans 1–24; that stretch reads MRPAALRGALLGCLCLALLCLGGA. The cysteines at positions 48 and 55 are disulfide-linked. Residue histidine 65 is part of the active site. 3 disulfides stabilise this stretch: cysteine 75/cysteine 121, cysteine 184/cysteine 241, and cysteine 202/cysteine 213. 2 N-linked (GlcNAc...) asparagine glycosylation sites follow: asparagine 76 and asparagine 106. Residues glutamate 114 and histidine 118 contribute to the active site. N-linked (GlcNAc...) asparagine glycosylation occurs at asparagine 212.

It belongs to the RNase T2 family. Ubiquitous. Higher expression levels observed in the temporal lobe and fetal brain.

It is found in the secreted. Its subcellular location is the lysosome lumen. The protein localises to the endoplasmic reticulum lumen. It localises to the mitochondrion intermembrane space. It carries out the reaction a ribonucleotidyl-ribonucleotide-RNA + H2O = a 3'-end 3'-phospho-ribonucleotide-RNA + a 5'-end dephospho-ribonucleoside-RNA + H(+). The catalysed reaction is an adenylyl-uridine-RNA = a 3'-end 2',3'-cyclophospho-AMP-RNA + a 5'-end dephospho-uridine-RNA. It catalyses the reaction a guanylyl-uridine-RNA = a 3'-end 2',3'-cyclophospho-GMP-RNA + a 5'-end dephospho-uridine-RNA. With respect to regulation, inhibited by Zn(2+) and Cu(2+). Ribonuclease that plays an essential role in innate immune response by recognizing and degrading RNAs from microbial pathogens that are subsequently sensed by TLR8. Cleaves preferentially single-stranded RNA molecules between purine and uridine residues, which critically contributes to the supply of catabolic uridine and the generation of purine-2',3'-cyclophosphate-terminated oligoribonucleotides. In turn, RNase T2 degradation products promote the RNA-dependent activation of TLR8. In plasmacytoid dendritic cells, it cooperates with PLD3 or PLD4 5'-&gt;3' exonucleases to process RNA fragments and release 2',3'-cyclic guanosine monophosphate (2',3'-cGMP), a potent stimulatory ligand for TLR7. Also plays a key role in degradation of mitochondrial RNA and processing of non-coding RNA imported from the cytosol into mitochondria. Participates as well in degradation of mitochondrion-associated cytosolic rRNAs. This is Ribonuclease T2 (RNASET2) from Homo sapiens (Human).